Consider the following 342-residue polypeptide: Vancomycin B-type resistance protein VanB (342 aa).

Residues Lys132, 168–170 (FVK), 176–177 (SS), 206–213 (EQAISGCE), and Phe240 contribute to the ATP site. The 202-residue stretch at 136 to 337 (YILTKNAGIA…LPALIDSLIT (202 aa)) folds into the ATP-grasp domain. His243 serves as a coordination point for substrate. ATP is bound at residue 303–304 (NE). Glu304 and Asn306 together coordinate Mg(2+).

The protein belongs to the D-alanine--D-alanine ligase family. Mg(2+) is required as a cofactor. Requires Mn(2+) as cofactor.

It localises to the cell membrane. It carries out the reaction (R)-lactate + D-alanine + ATP = D-alanyl-(R)-lactate + ADP + phosphate. Its function is as follows. Required for high-level resistance to glycopeptides antibiotics. D-Ala--D-Ala ligase of altered specificity which catalyzes ester bond formation between D-Ala and various D-hydroxy acids; producing a peptidoglycan which does not terminate in D-alanine but in D-lactate, thus preventing vancomycin binding. This Enterococcus faecalis (strain ATCC 700802 / V583) protein is Vancomycin B-type resistance protein VanB (vanB).